Here is a 254-residue protein sequence, read N- to C-terminus: Phosphonates import ATP-binding protein PhnC 2 (254 aa).

An ABC transporter domain is found at 4–248 (LEVNNLGKHY…KIESIYGFQQ (245 aa)). 37-44 (GPSGAGKS) contributes to the ATP binding site.

Belongs to the ABC transporter superfamily. Phosphonates importer (TC 3.A.1.9.1) family. In terms of assembly, the complex is composed of two ATP-binding proteins (PhnC), two transmembrane proteins (PhnE) and a solute-binding protein (PhnD).

Its subcellular location is the cell membrane. The catalysed reaction is phosphonate(out) + ATP + H2O = phosphonate(in) + ADP + phosphate + H(+). Part of the ABC transporter complex PhnCDE involved in phosphonates import. Responsible for energy coupling to the transport system. This Oceanobacillus iheyensis (strain DSM 14371 / CIP 107618 / JCM 11309 / KCTC 3954 / HTE831) protein is Phosphonates import ATP-binding protein PhnC 2.